We begin with the raw amino-acid sequence, 122 residues long: Large ribosomal subunit protein bL12 (122 aa).

The protein belongs to the bacterial ribosomal protein bL12 family. Homodimer. Part of the ribosomal stalk of the 50S ribosomal subunit. Forms a multimeric L10(L12)X complex, where L10 forms an elongated spine to which 2 to 4 L12 dimers bind in a sequential fashion. Binds GTP-bound translation factors.

In terms of biological role, forms part of the ribosomal stalk which helps the ribosome interact with GTP-bound translation factors. Is thus essential for accurate translation. The sequence is that of Large ribosomal subunit protein bL12 from Shewanella putrefaciens (strain CN-32 / ATCC BAA-453).